We begin with the raw amino-acid sequence, 208 residues long: 3,4-dihydroxy-2-butanone 4-phosphate synthase (208 aa).

Thr3 is modified (phosphothreonine). Mg(2+) is bound at residue Glu27. Asp31 contributes to the D-ribulose 5-phosphate binding site. The residue at position 56 (Cys56) is an S-glutathionyl cysteine; by GRX2. D-ribulose 5-phosphate contacts are provided by residues Thr88 and 145 to 149 (RRGHT). His148 serves as a coordination point for Mg(2+).

The protein belongs to the DHBP synthase family. Homodimer. The cofactor is Mg(2+). Mn(2+) serves as cofactor. In terms of processing, S-glutathionylation of Cys-56 is reversible and dependent on the cytoplasmic isoform of glutaredoxin-2.

Its subcellular location is the cytoplasm. It localises to the nucleus. The protein localises to the mitochondrion intermembrane space. The enzyme catalyses D-ribulose 5-phosphate = (2S)-2-hydroxy-3-oxobutyl phosphate + formate + H(+). The protein operates within cofactor biosynthesis; riboflavin biosynthesis; 2-hydroxy-3-oxobutyl phosphate from D-ribulose 5-phosphate: step 1/1. Functionally, catalyzes the conversion of D-ribulose 5-phosphate to formate and 3,4-dihydroxy-2-butanone 4-phosphate. Also has an unrelated function in expression of mitochondrial respiration. The sequence is that of 3,4-dihydroxy-2-butanone 4-phosphate synthase (RIB3) from Saccharomyces cerevisiae (strain ATCC 204508 / S288c) (Baker's yeast).